We begin with the raw amino-acid sequence, 427 residues long: Glucose-6-phosphate isomerase (427 aa).

The Proton donor role is filled by glutamate 277. Catalysis depends on residues histidine 298 and lysine 414.

This sequence belongs to the GPI family.

The protein localises to the cytoplasm. It carries out the reaction alpha-D-glucose 6-phosphate = beta-D-fructose 6-phosphate. The protein operates within carbohydrate biosynthesis; gluconeogenesis. It participates in carbohydrate degradation; glycolysis; D-glyceraldehyde 3-phosphate and glycerone phosphate from D-glucose: step 2/4. Catalyzes the reversible isomerization of glucose-6-phosphate to fructose-6-phosphate. The chain is Glucose-6-phosphate isomerase from Mycoplasma capricolum subsp. capricolum (strain California kid / ATCC 27343 / NCTC 10154).